The following is a 107-amino-acid chain: Thioredoxin (107 aa).

Residues 2–107 (AGVLKNVTDD…ALLRPGPVPR (106 aa)) form the Thioredoxin domain. The cysteines at positions 33 and 36 are disulfide-linked.

It belongs to the thioredoxin family.

Functionally, component of the thioredoxin-thioredoxin reductase system. Participates in various redox reactions through the reversible oxidation of its active center dithiol to a disulfide and catalyzes dithiol-disulfide exchange reactions. This chain is Thioredoxin (trxA), found in Streptomyces clavuligerus.